The primary structure comprises 722 residues: Threonine--tRNA ligase 1, cytoplasmic (722 aa).

A compositionally biased stretch (polar residues) spans 1–10 (MSQEKASSPS). Residues 1–48 (MSQEKASSPSGKMDGEKPVDASEEKRKEGGKKKSKDGGGDGGRAELNP) form a disordered region. Basic and acidic residues predominate over residues 13 to 27 (MDGEKPVDASEEKRK). The TGS domain maps to 78–142 (DSKPIKVTLP…ETDCTLELLK (65 aa)). K242 carries the post-translational modification N6-acetyllysine. The residue at position 245 (T245) is a Phosphothreonine. Position 297 is a phosphotyrosine (Y297). T452 is modified (phosphothreonine).

Belongs to the class-II aminoacyl-tRNA synthetase family. In terms of assembly, homodimer. ISGylated.

The protein resides in the cytoplasm. It catalyses the reaction tRNA(Thr) + L-threonine + ATP = L-threonyl-tRNA(Thr) + AMP + diphosphate + H(+). In terms of biological role, catalyzes the attachment of threonine to tRNA(Thr) in a two-step reaction: threonine is first activated by ATP to form Thr-AMP and then transferred to the acceptor end of tRNA(Thr). Also edits incorrectly charged tRNA(Thr) via its editing domain, at the post-transfer stage. The polypeptide is Threonine--tRNA ligase 1, cytoplasmic (Tars1) (Mus musculus (Mouse)).